We begin with the raw amino-acid sequence, 357 residues long: Probable RNA methyltransferase Daro_1157 (357 aa).

The active-site Proton acceptor is glutamate 91. Residues 94-320 form the Radical SAM core domain; sequence LLPRDGLCIS…TTVRNSAGQD (227 aa). Cysteines 101 and 325 form a disulfide. [4Fe-4S] cluster-binding residues include cysteine 108, cysteine 112, and cysteine 115. S-adenosyl-L-methionine contacts are provided by residues 153-154, serine 183, 206-208, and asparagine 282; these read GE and SLH. The active-site S-methylcysteine intermediate is cysteine 325.

The protein belongs to the radical SAM superfamily. RlmN family. It depends on [4Fe-4S] cluster as a cofactor.

The protein localises to the cytoplasm. This Dechloromonas aromatica (strain RCB) protein is Probable RNA methyltransferase Daro_1157.